Reading from the N-terminus, the 189-residue chain is GMP synthase [glutamine-hydrolyzing] subunit A (189 aa).

Positions 1-189 (MIVILNNGGQ…CKVCGFKFNE (189 aa)) constitute a Glutamine amidotransferase type-1 domain. Cysteine 76 serves as the catalytic Nucleophile. Residues histidine 163 and glutamate 165 contribute to the active site.

As to quaternary structure, heterodimer composed of a glutamine amidotransferase subunit (A) and a GMP-binding subunit (B).

The catalysed reaction is XMP + L-glutamine + ATP + H2O = GMP + L-glutamate + AMP + diphosphate + 2 H(+). The protein operates within purine metabolism; GMP biosynthesis; GMP from XMP (L-Gln route): step 1/1. Catalyzes the synthesis of GMP from XMP. This is GMP synthase [glutamine-hydrolyzing] subunit A from Methanococcus vannielii (strain ATCC 35089 / DSM 1224 / JCM 13029 / OCM 148 / SB).